Reading from the N-terminus, the 896-residue chain is Translation initiation factor IF-2 (896 aa).

Disordered regions lie at residues 32 to 99 (LAQA…TALP) and 117 to 304 (EITS…KQAE). Over residues 35-48 (AGSSDTKNSPASKA) the composition is skewed to polar residues. A compositionally biased stretch (basic and acidic residues) spans 153–169 (TPERIEETPIIRTRTEP). The span at 203–214 (AASTEETTQQQP) shows a compositional bias: low complexity. Residues 215–227 (RQNDAASHNNKQQ) show a composition bias toward polar residues. Residues 228 to 241 (PSGTSSRPASSAPS) are compositionally biased toward low complexity. Residues 256–280 (RGSERDRSKRSDESVKAFTGRDRYG) show a composition bias toward basic and acidic residues. Residues 401–570 (IRSPIVAFMG…ALQAEVLELK (170 aa)) form the tr-type G domain. The tract at residues 410 to 417 (GHVDHGKT) is G1. 410-417 (GHVDHGKT) is a binding site for GTP. Residues 435–439 (AITQH) are G2. Residues 456 to 459 (DTPG) form a G3 region. GTP contacts are provided by residues 456–460 (DTPGH) and 510–513 (NKCD). The G4 stretch occupies residues 510 to 513 (NKCD). The tract at residues 546–548 (SAK) is G5.

This sequence belongs to the TRAFAC class translation factor GTPase superfamily. Classic translation factor GTPase family. IF-2 subfamily.

The protein localises to the cytoplasm. Functionally, one of the essential components for the initiation of protein synthesis. Protects formylmethionyl-tRNA from spontaneous hydrolysis and promotes its binding to the 30S ribosomal subunits. Also involved in the hydrolysis of GTP during the formation of the 70S ribosomal complex. In Chlamydia trachomatis serovar L2 (strain ATCC VR-902B / DSM 19102 / 434/Bu), this protein is Translation initiation factor IF-2.